A 271-amino-acid polypeptide reads, in one-letter code: Aquaporin-1 (271 aa).

The Cytoplasmic segment spans residues 1 to 11 (MASEFKKKIFW). Residues 12–29 (RAVVAEFLAMTLFIFISI) traverse the membrane as a helical segment. Residues 30–48 (GSALGFQYPVRNNQTSGAA) lie on the Extracellular side of the membrane. N-linked (GlcNAc...) asparagine glycosylation occurs at N42. The helical transmembrane segment at 49 to 67 (QDNVKVSLAFGLSIATLAQ) threads the bilayer. The Cytoplasmic portion of the chain corresponds to 68 to 70 (SVG). Residues 71–84 (HISGAHLNPAVTLG) lie within the membrane without spanning it. Positions 78-80 (NPA) match the NPA 1 motif. At 85–92 (LLLSCQIS) the chain is on the cytoplasmic side. A helical transmembrane segment spans residues 93–111 (VLRAVMYIIAQCVGAIVAT). The Extracellular portion of the chain corresponds to 112–135 (AILSGITSSLPGNSLGLNSLAPGV). A helical transmembrane segment spans residues 136–155 (DSGQGLGIEIIGTLQLVLCV). Residues 156-165 (LATTDRRRRD) lie on the Cytoplasmic side of the membrane. The helical transmembrane segment at 166-183 (LGGSAPLAIGFSVALGHL) threads the bilayer. The Extracellular segment spans residues 184-188 (LAIDY). An intramembrane segment occupies 189–201 (TGCGINPARSFGS). The NPA 2 signature appears at 194 to 196 (NPA). Residues 202 to 208 (AVITHNF) are Extracellular-facing. The chain crosses the membrane as a helical span at residues 209–226 (QDHWVFWVGPFIGGALAV). The Cytoplasmic segment spans residues 227–271 (LIYDFILAPRSSDLTDRVKVWTSGQVEEYDLDGDDINSRVEMKPK). The residue at position 249 (S249) is a Phosphoserine. Phosphotyrosine is present on Y255. Phosphoserine is present on S264.

This sequence belongs to the MIP/aquaporin (TC 1.A.8) family. In terms of assembly, homotetramer; each monomer provides an independent water pore. Component of the ankyrin-1 complex in the erythrocyte, composed of ANK1, RHCE, RHAG, SLC4A1, EPB42, GYPA, GYPB and AQP1. Interacts with EPHB2; involved in endolymph production in the inner ear. Identified in a complex with STOM. Interacts (via the N-terminal) with ANK1 (via ANK 1-5 repeats). Interacts (via the C-terminal) with EPB42.

It localises to the cell membrane. The enzyme catalyses H2O(in) = H2O(out). It carries out the reaction nitric oxide(out) = nitric oxide(in). The catalysed reaction is CO2(out) = CO2(in). It catalyses the reaction glycerol(in) = glycerol(out). The enzyme catalyses H2O2(out) = H2O2(in). It carries out the reaction K(+)(in) = K(+)(out). The catalysed reaction is Na(+)(in) = Na(+)(out). Forms a water channel that facilitates the transport of water across cell membranes, playing a crucial role in water homeostasis in various tissues. Could also be permeable to small solutes including hydrogen peroxide, glycerol and gases such as amonnia (NH3), nitric oxide (NO) and carbon dioxide (CO2). Recruited to the ankyrin-1 complex, a multiprotein complex of the erythrocyte membrane, it could be part of a CO2 metabolon, linking facilitated diffusion of CO2 across the membrane, anion exchange of Cl(-)/HCO3(-) and interconversion of dissolved CO2 and carbonic acid in the cytosol. In vitro, it shows non-selective gated cation channel activity and may be permeable to cations like K(+) and Na(+) in vivo. The protein is Aquaporin-1 of Sus scrofa (Pig).